We begin with the raw amino-acid sequence, 217 residues long: Tegument protein BKRF4 (217 aa).

Positions 1-217 (MAMFLKSRGV…GNNNYNWPWL (217 aa)) are disordered. Positions 32–42 (YTLGSQASQSI) are enriched in polar residues. The segment covering 43–79 (QEEDVSDTDESDYSDEDEEIDLEEEYPSDEDPSEGSD) has biased composition (acidic residues). The interval 63 to 64 (DL) is interaction with host histones H3/H4. Positions 81-84 (DPSW) are interaction with host H2A/H2B. Residues 89–102 (SDESDYSESDEDEA) are compositionally biased toward acidic residues. The segment covering 106–132 (SQASRSSRVSPSTQQSSGLTPTPSFSR) has biased composition (low complexity). Positions 136–145 (RAPPRPPAPA) are enriched in pro residues. The segment covering 208 to 217 (GNNNYNWPWL) has biased composition (polar residues).

This sequence belongs to the lymphocryptovirus BKRF4 family. As to quaternary structure, forms a complex with the host H3/H4 dimer and histone chaperone ASF1. Also forms a complex with host H2A/H2B dimer. Interacts (via C-terminus) with BGLF2; this interaction is important for infectious virion production.

It is found in the virion tegument. It localises to the host nucleus. Its subcellular location is the host cytoplasm. The protein localises to the host perinuclear region. Its function is as follows. Histone-binding protein that binds to histones H2A/H2B, H3/H4 and cellular chromatin to overcome the host DNA damage response triggered by the viral genome ends. Interferes with histone ubiquitination and recruitment of repair proteins. The polypeptide is Tegument protein BKRF4 (Epstein-Barr virus (strain GD1) (HHV-4)).